We begin with the raw amino-acid sequence, 265 residues long: Hydroxyethylthiazole kinase (265 aa).

Position 50 (methionine 50) interacts with substrate. Residues arginine 125 and threonine 171 each coordinate ATP. Glycine 198 contributes to the substrate binding site.

The protein belongs to the Thz kinase family. Requires Mg(2+) as cofactor.

The catalysed reaction is 5-(2-hydroxyethyl)-4-methylthiazole + ATP = 4-methyl-5-(2-phosphooxyethyl)-thiazole + ADP + H(+). The protein operates within cofactor biosynthesis; thiamine diphosphate biosynthesis; 4-methyl-5-(2-phosphoethyl)-thiazole from 5-(2-hydroxyethyl)-4-methylthiazole: step 1/1. In terms of biological role, catalyzes the phosphorylation of the hydroxyl group of 4-methyl-5-beta-hydroxyethylthiazole (THZ). This chain is Hydroxyethylthiazole kinase, found in Cronobacter sakazakii (strain ATCC BAA-894) (Enterobacter sakazakii).